The following is a 520-amino-acid chain: Protein OS-9 homolog (520 aa).

The signal sequence occupies residues 1 to 23 (MIRRIRTLTPLLVLACAGSGAWA). Positions 121 to 135 (QVDNGNRDQTNGAES) are enriched in polar residues. A disordered region spans residues 121–144 (QVDNGNRDQTNGAESTSKEDEQRE). The MRH domain occupies 161–302 (GKCMYYISGW…VIYTPRLCND (142 aa)). The cysteines at positions 163 and 176 are disulfide-linked. A mannooligosaccharide derivative contacts are provided by W170, W171, Q183, D257, R263, E284, and Y290. Disulfide bonds link C256-C288 and C271-C300. The disordered stretch occupies residues 442–520 (GLVGTVDSND…SEEIFFKDEL (79 aa)). Residues 461–471 (GSISQPAQGTT) are compositionally biased toward polar residues. The span at 473-499 (DKGESNAETGEEKKKADEKIDHYEPEK) shows a compositional bias: basic and acidic residues. Residues 517-520 (KDEL) carry the Prevents secretion from ER motif.

It belongs to the OS-9 family. In terms of assembly, interacts with missfolded ER lumenal proteins.

It localises to the endoplasmic reticulum membrane. Lectin involved in the quality control of the secretory pathway. As a member of the endoplasmic reticulum-associated degradation lumenal (ERAD-L) surveillance system, targets misfolded endoplasmic reticulum lumenal glycoproteins for degradation. The protein is Protein OS-9 homolog (yos9) of Aspergillus fumigatus (strain ATCC MYA-4609 / CBS 101355 / FGSC A1100 / Af293) (Neosartorya fumigata).